Reading from the N-terminus, the 109-residue chain is Probable guanidinium efflux system subunit GdnC (109 aa).

The next 4 membrane-spanning stretches (helical) occupy residues 3 to 23, 26 to 46, 55 to 75, and 81 to 101; these read WGSV…LKHA, ALEW…LVKA, VYAV…IALF, and IAKL…KLVT.

It belongs to the drug/metabolite transporter (DMT) superfamily. Small multidrug resistance (SMR) (TC 2.A.7.1) family. YkkC/YkkD subfamily. In terms of assembly, the efflux pump is composed of GdnC and GdnD.

Its subcellular location is the cell membrane. Probably involved in guanidinium transport. The polypeptide is Probable guanidinium efflux system subunit GdnC (Bacillus licheniformis (strain ATCC 14580 / DSM 13 / JCM 2505 / CCUG 7422 / NBRC 12200 / NCIMB 9375 / NCTC 10341 / NRRL NRS-1264 / Gibson 46)).